A 639-amino-acid polypeptide reads, in one-letter code: Putative oxidoreductase UacF (639 aa).

5 4Fe-4S ferredoxin-type domains span residues 3–32 (KFIA…ENWP), 47–77 (KGQA…TFQS), 78–107 (DSVQ…MVDT), 110–139 (QKCD…LMDD), and 201–235 (QQAT…YIRL). Residues Cys-12, Cys-15, Cys-18, Cys-22, Cys-56, Cys-59, Cys-64, Cys-68, Cys-87, Cys-90, Cys-93, Cys-97, Cys-112, Cys-115, Cys-125, Cys-129, Cys-210, Cys-213, Cys-219, and Cys-223 each contribute to the [4Fe-4S] cluster site.

Requires [4Fe-4S] cluster as cofactor.

In terms of biological role, involved in formate-dependent uric acid degradation under microaerobic and anaerobic conditions. May reduce the enzymes necessary for uric acid degradation. The polypeptide is Putative oxidoreductase UacF (Escherichia coli (strain K12)).